Here is a 419-residue protein sequence, read N- to C-terminus: UPF0229 protein Tbd_1233 (419 aa).

The tract at residues 85–108 is disordered; that stretch reads GDRIDRPAGEGGGGSGGSPDGEGM. Residues 93 to 104 show a composition bias toward gly residues; the sequence is GEGGGGSGGSPD.

This sequence belongs to the UPF0229 family.

The chain is UPF0229 protein Tbd_1233 from Thiobacillus denitrificans (strain ATCC 25259 / T1).